The following is a 470-amino-acid chain: Siroheme synthase (470 aa).

Residues 1–201 (MDYFPIFCQL…NDHVQADQHV (201 aa)) form a precorrin-2 dehydrogenase /sirohydrochlorin ferrochelatase region. Residues 22-23 (EI) and 43-44 (CE) contribute to the NAD(+) site. Serine 128 carries the phosphoserine modification. The segment at 213–470 (GEVVLVGAGP…KVTECVAHVG (258 aa)) is uroporphyrinogen-III C-methyltransferase. Proline 222 contacts S-adenosyl-L-methionine. The active-site Proton acceptor is aspartate 245. Lysine 267 serves as the catalytic Proton donor. S-adenosyl-L-methionine contacts are provided by residues 298 to 300 (GGD), isoleucine 303, 328 to 329 (TA), methionine 379, and glycine 408.

This sequence in the N-terminal section; belongs to the precorrin-2 dehydrogenase / sirohydrochlorin ferrochelatase family. In the C-terminal section; belongs to the precorrin methyltransferase family.

The catalysed reaction is uroporphyrinogen III + 2 S-adenosyl-L-methionine = precorrin-2 + 2 S-adenosyl-L-homocysteine + H(+). It carries out the reaction precorrin-2 + NAD(+) = sirohydrochlorin + NADH + 2 H(+). It catalyses the reaction siroheme + 2 H(+) = sirohydrochlorin + Fe(2+). It participates in cofactor biosynthesis; adenosylcobalamin biosynthesis; precorrin-2 from uroporphyrinogen III: step 1/1. Its pathway is cofactor biosynthesis; adenosylcobalamin biosynthesis; sirohydrochlorin from precorrin-2: step 1/1. The protein operates within porphyrin-containing compound metabolism; siroheme biosynthesis; precorrin-2 from uroporphyrinogen III: step 1/1. It functions in the pathway porphyrin-containing compound metabolism; siroheme biosynthesis; siroheme from sirohydrochlorin: step 1/1. It participates in porphyrin-containing compound metabolism; siroheme biosynthesis; sirohydrochlorin from precorrin-2: step 1/1. Functionally, multifunctional enzyme that catalyzes the SAM-dependent methylations of uroporphyrinogen III at position C-2 and C-7 to form precorrin-2 via precorrin-1. Then it catalyzes the NAD-dependent ring dehydrogenation of precorrin-2 to yield sirohydrochlorin. Finally, it catalyzes the ferrochelation of sirohydrochlorin to yield siroheme. This Yersinia pestis protein is Siroheme synthase.